We begin with the raw amino-acid sequence, 332 residues long: Phosphate acyltransferase (332 aa).

This sequence belongs to the PlsX family. In terms of assembly, homodimer. Probably interacts with PlsY.

It is found in the cytoplasm. The enzyme catalyses a fatty acyl-[ACP] + phosphate = an acyl phosphate + holo-[ACP]. It participates in lipid metabolism; phospholipid metabolism. Catalyzes the reversible formation of acyl-phosphate (acyl-PO(4)) from acyl-[acyl-carrier-protein] (acyl-ACP). This enzyme utilizes acyl-ACP as fatty acyl donor, but not acyl-CoA. The protein is Phosphate acyltransferase of Oceanobacillus iheyensis (strain DSM 14371 / CIP 107618 / JCM 11309 / KCTC 3954 / HTE831).